Here is a 149-residue protein sequence, read N- to C-terminus: Ribosome maturation factor RimP (149 aa).

It belongs to the RimP family.

The protein localises to the cytoplasm. Its function is as follows. Required for maturation of 30S ribosomal subunits. This is Ribosome maturation factor RimP from Neisseria gonorrhoeae (strain NCCP11945).